A 143-amino-acid chain; its full sequence is Hemoglobin subunit alpha-2 (143 aa).

Ser2 is modified (N-acetylserine). Residues 2 to 143 (SLSSKDKATV…LALALSEKYR (142 aa)) enclose the Globin domain. His60 provides a ligand contact to O2. His89 is a binding site for heme b.

It belongs to the globin family. In terms of assembly, hb 2 is a heterotetramer of two alpha-2 and two beta-1 chains. Hb 3 is a heterotetramer of two alpha-2 and two beta-2 chains. Red blood cells.

In terms of biological role, involved in oxygen transport from gills to the various peripheral tissues. This chain is Hemoglobin subunit alpha-2 (hba2), found in Arctogadus glacialis (Arctic cod).